A 468-amino-acid chain; its full sequence is UDP-N-acetylmuramate--L-alanine ligase (468 aa).

Residue 116-122 participates in ATP binding; sequence GTHGKTT.

This sequence belongs to the MurCDEF family.

It localises to the cytoplasm. It carries out the reaction UDP-N-acetyl-alpha-D-muramate + L-alanine + ATP = UDP-N-acetyl-alpha-D-muramoyl-L-alanine + ADP + phosphate + H(+). Its pathway is cell wall biogenesis; peptidoglycan biosynthesis. Functionally, cell wall formation. The protein is UDP-N-acetylmuramate--L-alanine ligase of Fusobacterium nucleatum subsp. nucleatum (strain ATCC 25586 / DSM 15643 / BCRC 10681 / CIP 101130 / JCM 8532 / KCTC 2640 / LMG 13131 / VPI 4355).